The sequence spans 326 residues: uncharacterized protein (326 aa).

Helical transmembrane passes span 9 to 29 (WVVL…RWSL) and 33 to 53 (ISIC…ANSY). NADP(+) is bound by residues Asp-120, Asn-148, Tyr-214, Lys-218, and Thr-252. Tyr-214 (proton acceptor) is an active-site residue. The active-site Lowers pKa of active site Tyr is Lys-218.

Belongs to the short-chain dehydrogenases/reductases (SDR) family.

The protein resides in the mitochondrion membrane. In terms of biological role, involved in the resistance to DNA-damaging agents. This is an uncharacterized protein from Saccharomyces cerevisiae (strain ATCC 204508 / S288c) (Baker's yeast).